The primary structure comprises 592 residues: V-type ATP synthase alpha chain (592 aa).

233 to 240 (GPFGSGKT) contacts ATP.

It belongs to the ATPase alpha/beta chains family.

The enzyme catalyses ATP + H2O + 4 H(+)(in) = ADP + phosphate + 5 H(+)(out). Its function is as follows. Produces ATP from ADP in the presence of a proton gradient across the membrane. The V-type alpha chain is a catalytic subunit. The sequence is that of V-type ATP synthase alpha chain from Clostridium botulinum (strain Loch Maree / Type A3).